The primary structure comprises 145 residues: Deoxyuridine 5'-triphosphate nucleotidohydrolase (145 aa).

Substrate is bound by residues R63–G65, N76, T80–D82, and K90.

The protein belongs to the dUTPase family. Mg(2+) is required as a cofactor.

It carries out the reaction dUTP + H2O = dUMP + diphosphate + H(+). It participates in pyrimidine metabolism; dUMP biosynthesis; dUMP from dCTP (dUTP route): step 2/2. Functionally, this enzyme is involved in nucleotide metabolism: it produces dUMP, the immediate precursor of thymidine nucleotides and it decreases the intracellular concentration of dUTP so that uracil cannot be incorporated into DNA. The sequence is that of Deoxyuridine 5'-triphosphate nucleotidohydrolase from Clostridium acetobutylicum (strain ATCC 824 / DSM 792 / JCM 1419 / IAM 19013 / LMG 5710 / NBRC 13948 / NRRL B-527 / VKM B-1787 / 2291 / W).